Reading from the N-terminus, the 36-residue chain is Mu-agatoxin-Aa1a (36 aa).

4 disulfides stabilise this stretch: C2–C17, C9–C22, C16–C32, and C24–C30. N36 carries the post-translational modification Asparagine amide.

It belongs to the neurotoxin 07 (Beta/delta-agtx) family. 04 (aga-5) subfamily. As to expression, expressed by the venom gland.

Its subcellular location is the secreted. In terms of biological role, insecticidal neurotoxin that induces an irreversible spastic paralysis when injected into insects. Modifies presynaptic voltage-gated sodium channels (Nav), causing them to open at the normal resting potential of the nerve. This leads to spontaneous release of neurotransmitter and repetitive action potentials in motor neurons. This chain is Mu-agatoxin-Aa1a, found in Agelenopsis aperta (North American funnel-web spider).